A 367-amino-acid polypeptide reads, in one-letter code: Serine/threonine-protein kinase Sgk2 (367 aa).

The interval 1 to 26 (MNSSPAGTPSPQPSRANGNINLGPSA) is disordered. Ser10 carries the post-translational modification Phosphoserine. In terms of domain architecture, Protein kinase spans 35-292 (FDFLKVIGKG…FLEIKNHVFF (258 aa)). ATP-binding positions include 41-49 (IGKGNYGKV) and Lys64. Residues 68–78 (KKSILKKKEQS) carry the Nuclear localization signal motif. Asp159 (proton acceptor) is an active-site residue. At Thr193 the chain carries Phosphothreonine; by PDPK1. Positions 293-367 (SPINWDDLYH…APEDDDILDC (75 aa)) constitute an AGC-kinase C-terminal domain. Residues Ser334 and Ser356 each carry the phosphoserine modification. Position 357 is a phosphotyrosine (Tyr357).

This sequence belongs to the protein kinase superfamily. AGC Ser/Thr protein kinase family. Activated by phosphorylation on Ser-356 by an unknown kinase (may be mTORC2 but not confirmed), transforming it into a substrate for PDPK1 which then phosphorylates it on Thr-193. Highly expressed in liver, kidney and pancreas, and at lower levels in brain.

The protein localises to the cytoplasm. It localises to the nucleus. The enzyme catalyses L-seryl-[protein] + ATP = O-phospho-L-seryl-[protein] + ADP + H(+). The catalysed reaction is L-threonyl-[protein] + ATP = O-phospho-L-threonyl-[protein] + ADP + H(+). Two specific sites, one in the kinase domain (Thr-193) and the other in the C-terminal regulatory region (Ser-356), need to be phosphorylated for its full activation. In terms of biological role, serine/threonine-protein kinase which is involved in the regulation of a wide variety of ion channels, membrane transporters, cell growth, survival and proliferation. Up-regulates Na(+) channels: SCNN1A/ENAC, K(+) channels: KCNA3/Kv1.3, KCNE1 and KCNQ1, amino acid transporter: SLC6A19, glutamate transporter: SLC1A6/EAAT4, glutamate receptors: GRIA1/GLUR1 and GRIK2/GLUR6, Na(+)/H(+) exchanger: SLC9A3/NHE3, and the Na(+)/K(+) ATPase. The sequence is that of Serine/threonine-protein kinase Sgk2 (SGK2) from Homo sapiens (Human).